The sequence spans 311 residues: Aspartate carbamoyltransferase catalytic subunit (311 aa).

2 residues coordinate carbamoyl phosphate: Arg-55 and Thr-56. Lys-85 provides a ligand contact to L-aspartate. Residues Arg-106, His-135, and Gln-138 each coordinate carbamoyl phosphate. Residues Arg-168 and Arg-230 each contribute to the L-aspartate site. Leu-268 and Pro-269 together coordinate carbamoyl phosphate.

The protein belongs to the aspartate/ornithine carbamoyltransferase superfamily. ATCase family. In terms of assembly, heterododecamer (2C3:3R2) of six catalytic PyrB chains organized as two trimers (C3), and six regulatory PyrI chains organized as three dimers (R2).

The catalysed reaction is carbamoyl phosphate + L-aspartate = N-carbamoyl-L-aspartate + phosphate + H(+). The protein operates within pyrimidine metabolism; UMP biosynthesis via de novo pathway; (S)-dihydroorotate from bicarbonate: step 2/3. Functionally, catalyzes the condensation of carbamoyl phosphate and aspartate to form carbamoyl aspartate and inorganic phosphate, the committed step in the de novo pyrimidine nucleotide biosynthesis pathway. The polypeptide is Aspartate carbamoyltransferase catalytic subunit (Citrobacter koseri (strain ATCC BAA-895 / CDC 4225-83 / SGSC4696)).